Here is a 313-residue protein sequence, read N- to C-terminus: Biotin synthase (313 aa).

Positions 28–258 constitute a Radical SAM core domain; it reads NFGNDIELCS…LFPQARLRLS (231 aa). Cysteine 46, cysteine 50, and cysteine 53 together coordinate [4Fe-4S] cluster. The [2Fe-2S] cluster site is built by cysteine 90, cysteine 121, cysteine 181, and arginine 256.

It belongs to the radical SAM superfamily. Biotin synthase family. Homodimer. [4Fe-4S] cluster is required as a cofactor. [2Fe-2S] cluster serves as cofactor.

It catalyses the reaction (4R,5S)-dethiobiotin + (sulfur carrier)-SH + 2 reduced [2Fe-2S]-[ferredoxin] + 2 S-adenosyl-L-methionine = (sulfur carrier)-H + biotin + 2 5'-deoxyadenosine + 2 L-methionine + 2 oxidized [2Fe-2S]-[ferredoxin]. The protein operates within cofactor biosynthesis; biotin biosynthesis; biotin from 7,8-diaminononanoate: step 2/2. Its function is as follows. Catalyzes the conversion of dethiobiotin (DTB) to biotin by the insertion of a sulfur atom into dethiobiotin via a radical-based mechanism. The chain is Biotin synthase from Francisella tularensis subsp. tularensis (strain FSC 198).